The primary structure comprises 258 residues: UBX domain-containing protein 2A (258 aa).

Positions 1–14 (MKEVDNLDSIKEEW) are enriched in basic and acidic residues. The segment at 1 to 30 (MKEVDNLDSIKEEWACETGPPDSQPLNDNQ) is disordered. The segment at 1–152 (MKEVDNLDSI…SATPRIVSKA (152 aa)) is required for interaction with CHRNA3. The tract at residues 1–165 (MKEVDNLDSI…EVDNKSTLSA (165 aa)) is required for inhibition of CHRNA3 ubiquitination and translocation of CHRNA3 to the plasma membrane resulting in an increase in acetylcholine-gated nicotinic acetylcholine receptor currents. One can recognise an SEP domain in the interval 61–125 (QVDVNIKLWK…VEDKKNEVCM (65 aa)). Residues 168 to 258 (LNNLEPITRI…QKTAEPFRKL (91 aa)) form a required for interaction with VCP region. Positions 170-247 (NLEPITRIQI…DLKNAVIIQR (78 aa)) constitute a UBX domain.

In terms of assembly, part of a complex composed of STUB1/CHIP, VCP/p97, CHRNA3, and UBXN2A that modulates the ubiquitination and endoplasmic reticulum-associated degradation (ERAD) of CHRNA3. Within the complex UBXN2A acts as a scaffold protein required for the interaction of CHRNA3 with VCP/p97, this interaction also inhibits CHRNA3 ubiquitination by STUB1/CHIP and subsequently ERAD. Interacts (via SEP domain) with CHRNA3 and interacts (via UBX domain) with VCP/P97; these interactions are required for the interaction of CHRNA3 with the STUB1-VCP-UBXN2A complex. Interacts with HSPA9/MOT-2 (via SBD domain); the interaction inhibits HSPA9/MOT-2 interaction with and degradation of p53, thereby promotes p53 translocation to the nucleus. Interacts with RICTOR. Post-translationally, ubiquitinated. In terms of tissue distribution, expressed in the prefrontal cortex (at protein level). Expressed in the habenula and hippocampus (at protein level). Expressed in peripheral ganglia.

It is found in the golgi apparatus. Its subcellular location is the endoplasmic reticulum. The protein localises to the perikaryon. It localises to the cell projection. The protein resides in the dendrite. It is found in the nucleus. Its subcellular location is the cytoplasm. Acts to repress the ubiquitination and subsequent endoplasmic reticulum-associated degradation of CHRNA3 by the STUB1-VCP-UBXN2A complex in cortical neurons. Also acts to promote the translocation of CHRNA3 to the plasma membrane and subsequently increases plasma membrane acetylcholine-gated ion-channel activation. Plays a role in the inhibition of STUB1-mediated TP53 degradation, via its interaction with HSPA9 which acts to inhibit TP53 binding to HSPA9. Positively mediates the ubiquitination and proteosomal degradation of RICTOR, may thereby act as a negative regulator of the mTORC2 pathway. In Mus musculus (Mouse), this protein is UBX domain-containing protein 2A.